Here is a 114-residue protein sequence, read N- to C-terminus: Small ribosomal subunit protein bS6 (114 aa).

It belongs to the bacterial ribosomal protein bS6 family.

Functionally, binds together with bS18 to 16S ribosomal RNA. This Thermosynechococcus vestitus (strain NIES-2133 / IAM M-273 / BP-1) protein is Small ribosomal subunit protein bS6.